A 350-amino-acid chain; its full sequence is DNA polymerase IV (350 aa).

The 182-residue stretch at 6–187 folds into the UmuC domain; it reads IIHIDMDAFY…LPVEKIFGIG (182 aa). 2 residues coordinate Mg(2+): Asp10 and Asp105. Glu106 is an active-site residue.

This sequence belongs to the DNA polymerase type-Y family. In terms of assembly, monomer. The cofactor is Mg(2+).

It is found in the cytoplasm. It catalyses the reaction DNA(n) + a 2'-deoxyribonucleoside 5'-triphosphate = DNA(n+1) + diphosphate. In terms of biological role, poorly processive, error-prone DNA polymerase involved in untargeted mutagenesis. Copies undamaged DNA at stalled replication forks, which arise in vivo from mismatched or misaligned primer ends. These misaligned primers can be extended by PolIV. Exhibits no 3'-5' exonuclease (proofreading) activity. May be involved in translesional synthesis, in conjunction with the beta clamp from PolIII. The polypeptide is DNA polymerase IV (Protochlamydia amoebophila (strain UWE25)).